The sequence spans 387 residues: Sharpin (387 aa).

The interval 1–180 (MAPPAGGAAA…EREELAGSLA (180 aa)) is self-association. A compositionally biased stretch (polar residues) spans 122–132 (EGQNGSKSNSP). The disordered stretch occupies residues 122-169 (EGQNGSKSNSPPALGPEACPVSLPSPPEASTLKGPPPEADLPRSPGNL). The residue at position 165 (serine 165) is a Phosphoserine. The tract at residues 175 to 310 (LAGSLARAIA…SAPREAPATG (136 aa)) is interaction with SHANK1. Residues 219–288 (IRLQVTLEDA…PERSLASYGV (70 aa)) form the Ubiquitin-like domain. The segment at 305–349 (EAPATGPSPQHPQKMDGELGRLFPPSLGLPPGPQPAASSLPSPLQ) is disordered. Serine 312 carries the phosphoserine modification. Low complexity predominate over residues 339–349 (PAASSLPSPLQ). A RanBP2-type zinc finger spans residues 348–377 (LQPSWSCPSCTFINAPDRPGCEMCSTQRPC).

As to quaternary structure, monomer and homodimer. Component of the LUBAC complex (linear ubiquitin chain assembly complex) which consists of SHARPIN, RBCK1 and RNF31. LUBAC has a MW of approximately 600 kDa suggesting a heteromultimeric assembly of its subunits. Associates with the TNF-R1 signaling complex (TNF-RSC) in a stimulation-dependent manner. Interacts with EYA1, EYA2, SHANK1 and SHANK3 (via ANK repeats). In terms of tissue distribution, highly expressed in skeletal muscle and placenta and at lower levels in brain, heart, colon without mucosa, thymus, spleen, kidney, liver, small intestine, lung and peripheral blood leukocytes. Up-regulated in various tumor tissues such as kidney, liver, ovary and pancreas tumors.

It is found in the cytoplasm. The protein localises to the cytosol. Its subcellular location is the synapse. Its pathway is protein modification; protein ubiquitination. In terms of biological role, component of the LUBAC complex which conjugates linear polyubiquitin chains in a head-to-tail manner to substrates and plays a key role in NF-kappa-B activation and regulation of inflammation. LUBAC conjugates linear polyubiquitin to IKBKG and RIPK1 and is involved in activation of the canonical NF-kappa-B and the JNK signaling pathways. Linear ubiquitination mediated by the LUBAC complex interferes with TNF-induced cell death and thereby prevents inflammation. LUBAC is recruited to the TNF-R1 signaling complex (TNF-RSC) following polyubiquitination of TNF-RSC components by BIRC2 and/or BIRC3 and to conjugate linear polyubiquitin to IKBKG and possibly other components contributing to the stability of the complex. The LUBAC complex is also involved in innate immunity by conjugating linear polyubiquitin chains at the surface of bacteria invading the cytosol to form the ubiquitin coat surrounding bacteria. LUBAC is not able to initiate formation of the bacterial ubiquitin coat, and can only promote formation of linear polyubiquitins on pre-existing ubiquitin. The bacterial ubiquitin coat acts as an 'eat-me' signal for xenophagy and promotes NF-kappa-B activation. Together with OTULIN, the LUBAC complex regulates the canonical Wnt signaling during angiogenesis. This is Sharpin from Homo sapiens (Human).